Consider the following 148-residue polypeptide: Cystatin-C (148 aa).

A signal peptide spans 1 to 28 (MARSLGVPLLLLAALVVALALAVSPAAG). The Secondary area of contact motif lies at 83-87 (QIVSG). 2 disulfides stabilise this stretch: C101/C111 and C125/C145.

This sequence belongs to the cystatin family.

The protein resides in the secreted. This is a thiol proteinase inhibitor. This chain is Cystatin-C (CST3), found in Oryctolagus cuniculus (Rabbit).